We begin with the raw amino-acid sequence, 376 residues long: Alanine racemase (376 aa).

The Proton acceptor; specific for D-alanine role is filled by lysine 40. Lysine 40 carries the N6-(pyridoxal phosphate)lysine modification. Arginine 138 is a substrate binding site. Tyrosine 270 (proton acceptor; specific for L-alanine) is an active-site residue. A substrate-binding site is contributed by methionine 317.

The protein belongs to the alanine racemase family. The cofactor is pyridoxal 5'-phosphate.

It catalyses the reaction L-alanine = D-alanine. It participates in amino-acid biosynthesis; D-alanine biosynthesis; D-alanine from L-alanine: step 1/1. Catalyzes the interconversion of L-alanine and D-alanine. May also act on other amino acids. The chain is Alanine racemase (alr) from Lactobacillus delbrueckii subsp. bulgaricus (strain ATCC BAA-365 / Lb-18).